A 149-amino-acid chain; its full sequence is L-alanine exporter AlaE (149 aa).

The next 4 membrane-spanning stretches (helical) occupy residues 17-37 (FAMV…ISGM), 43-63 (LASR…YGVF), 86-106 (LTAY…TVGA), and 111-131 (IITA…FYGY).

The protein belongs to the AlaE exporter family.

It localises to the cell inner membrane. In terms of biological role, exports L-alanine. The chain is L-alanine exporter AlaE from Aliivibrio salmonicida (strain LFI1238) (Vibrio salmonicida (strain LFI1238)).